The chain runs to 184 residues: ADP-ribosylation factor-like protein 3 (184 aa).

The N-myristoyl glycine moiety is linked to residue Gly2. Residues 24–31 (GLDNAGKT), 68–72 (DIGGQ), and 127–130 (NKQD) each bind GTP.

The protein belongs to the small GTPase superfamily. Arf family.

The protein localises to the golgi apparatus. In terms of biological role, GTP-binding protein that may be involved in protein trafficking; may modulate vesicle budding and uncoating within the Golgi apparatus. The sequence is that of ADP-ribosylation factor-like protein 3 (arl-3) from Caenorhabditis elegans.